We begin with the raw amino-acid sequence, 215 residues long: MTPFTQHTGLVAPLDRANVDTDQIIPKQFLKSIKRTGFGPNLFDEWRYLDIGEPGRDNSTRPLNPEFVLNFPRYQGASVLLARENFGCGSSREHAPWALDEYGFRTVIAPSFADIFYNNSFKNGLLPIVLAEAQVDALFEQCLATEGYQLTVDLAAQRVRRPDGVEYGFDIDAFRKHCLLNGLDDIGLTLQDADAIGRFEQGHRARQPWLFGALQ.

Belongs to the LeuD family. LeuD type 1 subfamily. In terms of assembly, heterodimer of LeuC and LeuD.

The catalysed reaction is (2R,3S)-3-isopropylmalate = (2S)-2-isopropylmalate. It functions in the pathway amino-acid biosynthesis; L-leucine biosynthesis; L-leucine from 3-methyl-2-oxobutanoate: step 2/4. Functionally, catalyzes the isomerization between 2-isopropylmalate and 3-isopropylmalate, via the formation of 2-isopropylmaleate. This chain is 3-isopropylmalate dehydratase small subunit, found in Xanthomonas euvesicatoria pv. vesicatoria (strain 85-10) (Xanthomonas campestris pv. vesicatoria).